The following is a 434-amino-acid chain: DNA primase large subunit PriL (434 aa).

[4Fe-4S] cluster contacts are provided by C281, C392, C403, and C409.

This sequence belongs to the eukaryotic-type primase large subunit family. As to quaternary structure, heterodimer of a small subunit (PriS) and a large subunit (PriL). Requires [4Fe-4S] cluster as cofactor.

Regulatory subunit of DNA primase, an RNA polymerase that catalyzes the synthesis of short RNA molecules used as primers for DNA polymerase during DNA replication. Stabilizes and modulates the activity of the small subunit, increasing the rate of DNA synthesis, and conferring RNA synthesis capability. The DNA polymerase activity may enable DNA primase to also catalyze primer extension after primer synthesis. May also play a role in DNA repair. The polypeptide is DNA primase large subunit PriL (Methanothermobacter thermautotrophicus (strain ATCC 29096 / DSM 1053 / JCM 10044 / NBRC 100330 / Delta H) (Methanobacterium thermoautotrophicum)).